The primary structure comprises 510 residues: G-protein coupled receptor dmsr-1 (510 aa).

Residues 1–35 (MEFTECKTTFIHLPDKSFLYDVFVSVYNFYHPIHA) are Extracellular-facing. A helical transmembrane segment spans residues 36–56 (YLSIFLCVLGTIANFCNIVVL). Over 57–64 (TRRTMRTP) the chain is Cytoplasmic. The helical transmembrane segment at 65–85 (VNMILTAMASCDTVVLFSNLI) threads the bilayer. At 86–107 (YTTHYSFVAFKFCHPKHWSYSW) the chain is on the extracellular side. A helical transmembrane segment spans residues 108–128 (ALFLIAHAHLSLVAHSSSVWL). At 129 to 155 (SVMLALVRYVTLRSRGNMGGMQVTLRH) the chain is on the cytoplasmic side. The chain crosses the membrane as a helical span at residues 156–176 (SYYAVAVTVSLVAVLNAPNFL). Residues 177 to 223 (NYKINEQPLNETCTDLDPMFWNSPAYLPGIADIAKANSCLVFRLSYW) are Extracellular-facing. Asn186 carries an N-linked (GlcNAc...) asparagine glycan. Residues 224 to 244 (ISGMVFKVLPCALLSLFVWLL) traverse the membrane as a helical segment. At 245 to 307 (LRILREVREN…GERVDRTTHM (63 aa)) the chain is on the cytoplasmic side. A helical membrane pass occupies residues 308–328 (LLAIVAVMLVTELPQGIMAVL). The Extracellular portion of the chain corresponds to 329 to 343 (SGMCSEEFRIYIYNN). Residues 344-364 (LGDILDLFSLCGSCCSFIIYC) traverse the membrane as a helical segment. The Cytoplasmic portion of the chain corresponds to 365–510 (SMSGQFRNEF…DGIRGHFQNI (146 aa)). A disordered region spans residues 452 to 510 (GCDSITPCSPMPTSFPSSPLPPIRSGEDESTDETSHLLNSSGPNSTASADGIRGHFQNI). The span at 487–499 (HLLNSSGPNSTAS) shows a compositional bias: polar residues.

Belongs to the G-protein coupled receptor 1 family. Expressed in head neurons including the RID neuron and the paired AIY neurons, and in tail neurons including the paired PHA and PHB neurons. Not expressed in AVE and AVA neurons.

It localises to the cell membrane. Functionally, G-protein coupled receptor. Its function is as follows. G-protein coupled receptor for flp-13 RFamide neuropeptides in vitro. Upon activation by flp-13 RFamide neuropeptides, promotes sleep in response to cellular stress also known as stress-induced sleep (SIS), probably by inhibiting the activity of wake-promoting neurons. This chain is G-protein coupled receptor dmsr-1, found in Caenorhabditis elegans.